Consider the following 98-residue polypeptide: Protein PROLINE CONTENT ALTERNATIVE 22 (98 aa).

Mainly expressed in flowers, to a lower extent, in roots and, at very low levels, in leaves and stems.

Its subcellular location is the cytoplasm. Acts as an opponent to RZF1 during early seedling growth in term of proline accumulation in response to dehydration and abscisic acid (ABA). Confers sensitivity to abiotic stresses such as ABA, drought and osmotic stress (e.g. mannitol treatment) by preventing proline accumulation and by reducing the expression of dehydration-inducible genes. Promotes the production of lipid peroxidation by drought stress thus leading to malondialdehyde (MDA) synthesis. Prevents pollen tube elongation. Necessary for RZF1 expression in seedlings. In Arabidopsis thaliana (Mouse-ear cress), this protein is Protein PROLINE CONTENT ALTERNATIVE 22.